A 1264-amino-acid polypeptide reads, in one-letter code: Kinesin-like protein KIN-14B (1264 aa).

Positions 1–10 (MAEQKSTNMW) are enriched in polar residues. The tract at residues 1–52 (MAEQKSTNMWNWEVTGFESKKSPSSEEGVHRTPSSMLRRYSIPKNSLPPHSS) is disordered. Basic and acidic residues predominate over residues 18 to 30 (ESKKSPSSEEGVH). Residues 53–84 (ELASKVQSLKDKVQLAKDDYVGLRQEATDLQE) adopt a coiled-coil conformation. A Kinesin motor domain is found at 138–452 (NVKVFCRARP…LNYAARARNT (315 aa)). An ATP-binding site is contributed by 219-226 (GQTHAGKT). Coiled coils occupy residues 462–511 (IKKW…YNEV), 545–592 (QLRN…LKSD), and 617–640 (TKKLEEELKKRDALIERLHEENEK). Residues 588–615 (ALKSDMTRSRDPLEPQPRAAENTLDSSA) form a disordered region. Residues 589 to 600 (LKSDMTRSRDPL) are compositionally biased toward basic and acidic residues. Over residues 652 to 668 (SSTQVSSPSSKASPTVQ) the composition is skewed to low complexity. 2 disordered regions span residues 652–684 (SSTQVSSPSSKASPTVQPADVDSAGTLPSSVDK) and 1117–1136 (PEQEDNLQDEKRPSIDSISS).

This sequence belongs to the TRAFAC class myosin-kinesin ATPase superfamily. Kinesin family. KIN-14 subfamily. Homodimer and heterodimer with KCA1. Interacts with CDKA-1. Interacts with At4g14310. In terms of tissue distribution, expressed in roots, leaves, stems and flowers.

Its subcellular location is the cell membrane. Functionally, kinesin-like protein required for chloroplast movements and anchor to the plasma membrane. Mediates chloroplast movement via chloroplast actin (cp-actin) filaments. Required for the chloroplast avoidance response under high intensity blue light. Mediates redundantly with CHUP1 the nuclear avoidance response under high intensity blue light. May be involved in division plane determination. This chain is Kinesin-like protein KIN-14B, found in Arabidopsis thaliana (Mouse-ear cress).